We begin with the raw amino-acid sequence, 285 residues long: N(G),N(G)-dimethylarginine dimethylaminohydrolase 1 (285 aa).

Ala-2 carries the post-translational modification N-acetylalanine. Leu-30 provides a ligand contact to substrate. A Phosphoserine modification is found at Ser-33. The substrate site is built by Asp-73, Glu-78, Asp-79, Arg-98, and Arg-145. His-173 serves as the catalytic Proton donor. Cys-222 carries the post-translational modification S-nitrosocysteine. Val-268 is a substrate binding site. An S-nitrosocysteine modification is found at Cys-274. The active-site Nucleophile is the Cys-274. Cys-274 lines the Zn(2+) pocket.

This sequence belongs to the DDAH family. Monomer. In terms of tissue distribution, detected in red blood cells (at protein level). Widely distributed, high amounts found in kidney, brain, aorta and pancreas.

It carries out the reaction N(omega),N(omega)-dimethyl-L-arginine + H2O = dimethylamine + L-citrulline. It catalyses the reaction N(omega)-methyl-L-arginine + H2O = L-citrulline + methylamine. With respect to regulation, inhibited by zinc ions. In terms of biological role, hydrolyzes N(G),N(G)-dimethyl-L-arginine (ADMA) and N(G)-monomethyl-L-arginine (MMA) which act as inhibitors of NOS. Has therefore a role in the regulation of nitric oxide generation. The sequence is that of N(G),N(G)-dimethylarginine dimethylaminohydrolase 1 (Ddah1) from Rattus norvegicus (Rat).